Reading from the N-terminus, the 674-residue chain is Protein tesmin/TSO1-like CXC 2 (674 aa).

Polar residues-rich tracts occupy residues 1–16 (MDTP…TPIS) and 76–89 (THNS…NSVE). 2 disordered regions span residues 1-20 (MDTP…KSRF) and 69-113 (KESR…GLNI). Residues 95 to 109 (STSHEEVPAEGEDTK) show a composition bias toward basic and acidic residues. Positions 373–498 (SCKRCNCKKS…RCEGCKNAFG (126 aa)) constitute a CRC domain. Disordered stretches follow at residues 504–529 (SIDM…SQQN) and 623–655 (IPNI…RRNG). The span at 507–516 (MEAEQEEENE) shows a compositional bias: acidic residues.

This sequence belongs to the lin-54 family. Ubiquitous but expressed mostly in all the aerial organs with highest expression in flowers.

It localises to the nucleus. Functionally, plays a role in development of both male and female reproductive tissues. This Arabidopsis thaliana (Mouse-ear cress) protein is Protein tesmin/TSO1-like CXC 2 (TCX2).